We begin with the raw amino-acid sequence, 187 residues long: Elongation factor P (187 aa).

It belongs to the elongation factor P family.

It localises to the cytoplasm. It participates in protein biosynthesis; polypeptide chain elongation. Its function is as follows. Involved in peptide bond synthesis. Stimulates efficient translation and peptide-bond synthesis on native or reconstituted 70S ribosomes in vitro. Probably functions indirectly by altering the affinity of the ribosome for aminoacyl-tRNA, thus increasing their reactivity as acceptors for peptidyl transferase. This Paenarthrobacter aurescens (strain TC1) protein is Elongation factor P.